A 627-amino-acid polypeptide reads, in one-letter code: 1-deoxy-D-xylulose-5-phosphate synthase (627 aa).

Residues H72 and 113–115 each bind thiamine diphosphate; that span reads GHS. D144 lines the Mg(2+) pocket. Residues 145-146, N173, Y283, and E366 contribute to the thiamine diphosphate site; that span reads GA. N173 serves as a coordination point for Mg(2+).

The protein belongs to the transketolase family. DXPS subfamily. Homodimer. Mg(2+) is required as a cofactor. The cofactor is thiamine diphosphate.

It catalyses the reaction D-glyceraldehyde 3-phosphate + pyruvate + H(+) = 1-deoxy-D-xylulose 5-phosphate + CO2. The protein operates within metabolic intermediate biosynthesis; 1-deoxy-D-xylulose 5-phosphate biosynthesis; 1-deoxy-D-xylulose 5-phosphate from D-glyceraldehyde 3-phosphate and pyruvate: step 1/1. Its function is as follows. Catalyzes the acyloin condensation reaction between C atoms 2 and 3 of pyruvate and glyceraldehyde 3-phosphate to yield 1-deoxy-D-xylulose-5-phosphate (DXP). The sequence is that of 1-deoxy-D-xylulose-5-phosphate synthase from Macrococcus caseolyticus (strain JCSC5402) (Macrococcoides caseolyticum).